A 493-amino-acid polypeptide reads, in one-letter code: Amidophosphoribosyltransferase (493 aa).

The propeptide occupies Met-1 to Ala-26. The Nucleophile role is filled by Cys-27. The region spanning Cys-27–Ala-252 is the Glutamine amidotransferase type-2 domain. Residue Cys-268 participates in [4Fe-4S] cluster binding. Ser-315, Asp-377, and Asp-378 together coordinate Mg(2+). [4Fe-4S] cluster is bound by residues Cys-414, Cys-465, and Cys-468.

This sequence in the C-terminal section; belongs to the purine/pyrimidine phosphoribosyltransferase family. Mg(2+) serves as cofactor. [4Fe-4S] cluster is required as a cofactor.

It carries out the reaction 5-phospho-beta-D-ribosylamine + L-glutamate + diphosphate = 5-phospho-alpha-D-ribose 1-diphosphate + L-glutamine + H2O. Its pathway is purine metabolism; IMP biosynthesis via de novo pathway; N(1)-(5-phospho-D-ribosyl)glycinamide from 5-phospho-alpha-D-ribose 1-diphosphate: step 1/2. Its function is as follows. Catalyzes the formation of phosphoribosylamine from phosphoribosylpyrophosphate (PRPP) and glutamine. The chain is Amidophosphoribosyltransferase from Synechococcus elongatus (strain ATCC 33912 / PCC 7942 / FACHB-805) (Anacystis nidulans R2).